The sequence spans 554 residues: Carboxypeptidase Y homolog A (554 aa).

Positions 1-17 (MRISASTVLLGAASAAS) are cleaved as a signal peptide. Positions 18–137 (AASFQNQAQH…QLDNFNLRVK (120 aa)) are excised as a propeptide. Disulfide bonds link Cys-191-Cys-431, Cys-325-Cys-339, Cys-349-Cys-372, Cys-356-Cys-365, and Cys-394-Cys-401. Residue Asn-222 is glycosylated (N-linked (GlcNAc...) asparagine). Residue Ser-278 is part of the active site. Asp-470 is an active-site residue. Asn-518 carries an N-linked (GlcNAc...) asparagine glycan. Residue His-529 is part of the active site.

It belongs to the peptidase S10 family.

Its subcellular location is the vacuole. It catalyses the reaction Release of a C-terminal amino acid with broad specificity.. Functionally, vacuolar carboxypeptidase involved in degradation of small peptides. Digests preferentially peptides containing an aliphatic or hydrophobic residue in P1' position, as well as methionine, leucine or phenylalanine in P1 position of ester substrate. This chain is Carboxypeptidase Y homolog A (cpyA), found in Neurospora crassa (strain ATCC 24698 / 74-OR23-1A / CBS 708.71 / DSM 1257 / FGSC 987).